The chain runs to 361 residues: Small ribosomal subunit protein mS46 (361 aa).

The N-terminal 14 residues, 1 to 14 (MRSSMFRCVSRAHY), are a transit peptide targeting the mitochondrion. The disordered stretch occupies residues 37-99 (ASSNALKLDK…SDSVRANKQQ (63 aa)). The span at 43-52 (KLDKMKEGRM) shows a compositional bias: basic and acidic residues. Residues 59–68 (GNQNRNSMNN) are compositionally biased toward low complexity. Over residues 69 to 91 (KESRGREGNQGERNMRLKNRSSD) the composition is skewed to basic and acidic residues.

It belongs to the mitochondrion-specific ribosomal protein mS46 family. In terms of assembly, component of the mitochondrial small ribosomal subunit (mt-SSU). Mature yeast 74S mitochondrial ribosomes consist of a small (37S) and a large (54S) subunit. The 37S small subunit contains a 15S ribosomal RNA (15S mt-rRNA) and 34 different proteins. The 54S large subunit contains a 21S rRNA (21S mt-rRNA) and 46 different proteins.

It localises to the mitochondrion. In terms of biological role, component of the mitochondrial ribosome (mitoribosome), a dedicated translation machinery responsible for the synthesis of mitochondrial genome-encoded proteins, including at least some of the essential transmembrane subunits of the mitochondrial respiratory chain. The mitoribosomes are attached to the mitochondrial inner membrane and translation products are cotranslationally integrated into the membrane. This is Small ribosomal subunit protein mS46 (RSM28) from Saccharomyces cerevisiae (strain ATCC 204508 / S288c) (Baker's yeast).